Here is a 563-residue protein sequence, read N- to C-terminus: Lipase 2 (563 aa).

A signal peptide spans 1–19 (MVSKSLFLAAAVNLAGVLA). Position 20 is a pyrrolidone carboxylic acid (Gln20). Cys80 and Cys124 form a disulfide bridge. Catalysis depends on Ser236, which acts as the Acyl-ester intermediate. Cys295 and Cys307 are joined by a disulfide. Asn302 carries N-linked (GlcNAc...) asparagine glycosylation. The active-site Charge relay system is Glu373. Asn383 carries N-linked (GlcNAc...) asparagine glycosylation. His482 (charge relay system) is an active-site residue.

This sequence belongs to the type-B carboxylesterase/lipase family. In terms of assembly, monomer.

The protein resides in the secreted. The enzyme catalyses a triacylglycerol + H2O = a diacylglycerol + a fatty acid + H(+). Its function is as follows. Hydrolyzes all ester bonds in triglyceride and displays a high affinity for triolein. For unsaturated substrates having long fatty acyl chains (C18:2 cis-9, cis-12 and C18:3 cis-9, cis-12, cis-15) GCL I shows higher specific activity than GCL II, whereas GCL II shows higher specific activity against saturated substrates having short fatty acid chains (C8, C10, C12 and C14). This Geotrichum candidum (Oospora lactis) protein is Lipase 2 (LIP2).